We begin with the raw amino-acid sequence, 562 residues long: Phosphoacetylglucosamine mutase (562 aa).

Serine 74 serves as the catalytic Phosphoserine intermediate. The Mg(2+) site is built by serine 74, aspartate 291, aspartate 293, and aspartate 295. Substrate is bound by residues 395–397, 526–530, and arginine 535; these read EAN and RPSGT.

It belongs to the phosphohexose mutase family. Mg(2+) serves as cofactor.

It catalyses the reaction N-acetyl-alpha-D-glucosamine 1-phosphate = N-acetyl-D-glucosamine 6-phosphate. It participates in nucleotide-sugar biosynthesis; UDP-N-acetyl-alpha-D-glucosamine biosynthesis; N-acetyl-alpha-D-glucosamine 1-phosphate from alpha-D-glucosamine 6-phosphate (route I): step 2/2. Functionally, interconverts GlcNAc-6-P and GlcNAc-1-P. The chain is Phosphoacetylglucosamine mutase from Oryza sativa subsp. japonica (Rice).